The following is a 302-amino-acid chain: Oxygen-dependent coproporphyrinogen-III oxidase (302 aa).

Residue S94 participates in substrate binding. The a divalent metal cation site is built by H98 and H108. Catalysis depends on H108, which acts as the Proton donor. 110 to 112 (NVR) contributes to the substrate binding site. Positions 147 and 177 each coordinate a divalent metal cation. Residues 242–277 (YVEFNLVWDRGTLFGLQSGGRTESILMSMPPLARWE) are important for dimerization. Position 260 to 262 (260 to 262 (GGR)) interacts with substrate.

It belongs to the aerobic coproporphyrinogen-III oxidase family. Homodimer. A divalent metal cation serves as cofactor.

Its subcellular location is the cytoplasm. It carries out the reaction coproporphyrinogen III + O2 + 2 H(+) = protoporphyrinogen IX + 2 CO2 + 2 H2O. It functions in the pathway porphyrin-containing compound metabolism; protoporphyrin-IX biosynthesis; protoporphyrinogen-IX from coproporphyrinogen-III (O2 route): step 1/1. Functionally, involved in the heme biosynthesis. Catalyzes the aerobic oxidative decarboxylation of propionate groups of rings A and B of coproporphyrinogen-III to yield the vinyl groups in protoporphyrinogen-IX. The sequence is that of Oxygen-dependent coproporphyrinogen-III oxidase from Photorhabdus laumondii subsp. laumondii (strain DSM 15139 / CIP 105565 / TT01) (Photorhabdus luminescens subsp. laumondii).